Here is a 144-residue protein sequence, read N- to C-terminus: Probable transcription termination protein NusA (144 aa).

The KH domain occupies 101–144; it reads RTDIVVGVKPEEIGKVIGKEGKNIKLFKDAVSRYFNVNSISVKQ.

It belongs to the NusA family.

The protein resides in the cytoplasm. Functionally, participates in transcription termination. This is Probable transcription termination protein NusA from Thermoplasma acidophilum (strain ATCC 25905 / DSM 1728 / JCM 9062 / NBRC 15155 / AMRC-C165).